The primary structure comprises 544 residues: Ribosomal protein S6 kinase-like 1 (544 aa).

Residues 87–115 (VHVDPNKERREAVKLKITKYLRRAEEIFN) form the MIT domain. Residues 145–534 (SALEQLKGCR…TSRLKSHPFF (390 aa)) enclose the Protein kinase domain. Residues 151–159 (KGCRVVGII) and Lys-177 each bind ATP. Disordered regions lie at residues 262-344 (PAEL…HWVR) and 353-372 (AYGR…SLGS). The span at 303 to 313 (SRPSAVFSSDP) shows a compositional bias: polar residues. The Proton acceptor role is filled by Asp-407.

The protein belongs to the protein kinase superfamily. Ser/Thr protein kinase family. S6 kinase subfamily.

It carries out the reaction L-seryl-[protein] + ATP = O-phospho-L-seryl-[protein] + ADP + H(+). The enzyme catalyses L-threonyl-[protein] + ATP = O-phospho-L-threonyl-[protein] + ADP + H(+). This is Ribosomal protein S6 kinase-like 1 (Rps6kl1) from Mus musculus (Mouse).